The chain runs to 375 residues: D-aspartate oxidase (375 aa).

Positions Met1–Ala17 are cleaved as a signal peptide. The FAD site is built by Ser9, Leu12, Asp34, Ser51, and Gly55. The N-linked (GlcNAc...) asparagine glycan is linked to Asn203. Residues Arg322, Gly354, and Tyr355 each contribute to the FAD site.

The protein belongs to the DAMOX/DASOX family. Requires FAD as cofactor.

It catalyses the reaction D-aspartate + O2 + H2O = oxaloacetate + H2O2 + NH4(+). The catalysed reaction is D-glutamate + O2 + H2O = H2O2 + 2-oxoglutarate + NH4(+). Its function is as follows. Selectively catalyzes the oxidative deamination of acidic amino acids. Protects the organism from the toxicity of D-amino acids. Enables the organism to utilize D-amino acids as a source of nutrients. Enables the organism to utilize D-aspartate as a nitrogen source. The polypeptide is D-aspartate oxidase (DDO) (Komagataella phaffii (strain GS115 / ATCC 20864) (Yeast)).